The chain runs to 79 residues: U-scoloptoxin(15)-Sm1a (79 aa).

Positions 1 to 25 (MKMNVVVLSVVVLLLFIANIQQTEA) are cleaved as a signal peptide.

It belongs to the scoloptoxin-15 family. Post-translationally, contains 2 disulfide bonds. In terms of tissue distribution, expressed by the venom gland.

The protein localises to the secreted. This Scolopendra morsitans (Tanzanian blue ringleg centipede) protein is U-scoloptoxin(15)-Sm1a.